A 293-amino-acid polypeptide reads, in one-letter code: Lipoyl synthase (293 aa).

7 residues coordinate [4Fe-4S] cluster: Cys-47, Cys-52, Cys-58, Cys-73, Cys-77, Cys-80, and Ser-285. The Radical SAM core domain maps to 59 to 274 (WSEGTATFMI…EKIGLELGFR (216 aa)).

Belongs to the radical SAM superfamily. Lipoyl synthase family. [4Fe-4S] cluster is required as a cofactor.

The protein resides in the cytoplasm. The catalysed reaction is [[Fe-S] cluster scaffold protein carrying a second [4Fe-4S](2+) cluster] + N(6)-octanoyl-L-lysyl-[protein] + 2 oxidized [2Fe-2S]-[ferredoxin] + 2 S-adenosyl-L-methionine + 4 H(+) = [[Fe-S] cluster scaffold protein] + N(6)-[(R)-dihydrolipoyl]-L-lysyl-[protein] + 4 Fe(3+) + 2 hydrogen sulfide + 2 5'-deoxyadenosine + 2 L-methionine + 2 reduced [2Fe-2S]-[ferredoxin]. Its pathway is protein modification; protein lipoylation via endogenous pathway; protein N(6)-(lipoyl)lysine from octanoyl-[acyl-carrier-protein]: step 2/2. Functionally, catalyzes the radical-mediated insertion of two sulfur atoms into the C-6 and C-8 positions of the octanoyl moiety bound to the lipoyl domains of lipoate-dependent enzymes, thereby converting the octanoylated domains into lipoylated derivatives. The polypeptide is Lipoyl synthase (Christiangramia forsetii (strain DSM 17595 / CGMCC 1.15422 / KT0803) (Gramella forsetii)).